Reading from the N-terminus, the 249-residue chain is Enolase-phosphatase E1 (249 aa).

Mg(2+)-binding residues include D15 and E17. Substrate contacts are provided by residues 146–147 (SS) and K180. Residue D205 participates in Mg(2+) binding.

Belongs to the HAD-like hydrolase superfamily. MasA/MtnC family. Monomer. It depends on Mg(2+) as a cofactor.

The protein localises to the cytoplasm. It localises to the nucleus. It catalyses the reaction 5-methylsulfanyl-2,3-dioxopentyl phosphate + H2O = 1,2-dihydroxy-5-(methylsulfanyl)pent-1-en-3-one + phosphate. The protein operates within amino-acid biosynthesis; L-methionine biosynthesis via salvage pathway; L-methionine from S-methyl-5-thio-alpha-D-ribose 1-phosphate: step 3/6. Its pathway is amino-acid biosynthesis; L-methionine biosynthesis via salvage pathway; L-methionine from S-methyl-5-thio-alpha-D-ribose 1-phosphate: step 4/6. Bifunctional enzyme that catalyzes the enolization of 2,3-diketo-5-methylthiopentyl-1-phosphate (DK-MTP-1-P) into the intermediate 2-hydroxy-3-keto-5-methylthiopentenyl-1-phosphate (HK-MTPenyl-1-P), which is then dephosphorylated to form the acireductone 1,2-dihydroxy-3-keto-5-methylthiopentene (DHK-MTPene). The polypeptide is Enolase-phosphatase E1 (Caenorhabditis briggsae).